The sequence spans 300 residues: tRNA pseudouridine synthase B (300 aa).

Aspartate 38 functions as the Nucleophile in the catalytic mechanism.

The protein belongs to the pseudouridine synthase TruB family. Type 1 subfamily.

The catalysed reaction is uridine(55) in tRNA = pseudouridine(55) in tRNA. Functionally, responsible for synthesis of pseudouridine from uracil-55 in the psi GC loop of transfer RNAs. The chain is tRNA pseudouridine synthase B from Dehalococcoides mccartyi (strain ATCC BAA-2266 / KCTC 15142 / 195) (Dehalococcoides ethenogenes (strain 195)).